The sequence spans 101 residues: Small ribosomal subunit protein bS18c (101 aa).

The protein belongs to the bacterial ribosomal protein bS18 family. Part of the 30S ribosomal subunit.

The protein resides in the plastid. It localises to the chloroplast. The protein is Small ribosomal subunit protein bS18c of Aethionema cordifolium (Lebanon stonecress).